Here is a 205-residue protein sequence, read N- to C-terminus: Lymphotoxin-alpha (205 aa).

Positions 1-34 (MTPPGRLYLPRVRGTRLLFLLLGLLLALPPRAKG) are cleaved as a signal peptide. The region spanning 63–205 (PAAHLVGDPS…SSVFFGAFAL (143 aa)) is the THD domain. N-linked (GlcNAc...) asparagine glycosylation occurs at N96. C120 and C156 are joined by a disulfide.

This sequence belongs to the tumor necrosis factor family. Homotrimer, and heterotrimer of either two LTB and one LTA subunits or (less prevalent) two LTA and one LTB subunits. Interacts with TNFRSF14.

It localises to the secreted. Its subcellular location is the membrane. Its function is as follows. Cytokine that in its homotrimeric form binds to TNFRSF1A/TNFR1, TNFRSF1B/TNFBR and TNFRSF14/HVEM. In its heterotrimeric form with LTB binds to TNFRSF3/LTBR. Lymphotoxin is produced by lymphocytes and is cytotoxic for a wide range of tumor cells in vitro and in vivo. The protein is Lymphotoxin-alpha (LTA) of Marmota monax (Woodchuck).